Here is a 100-residue protein sequence, read N- to C-terminus: Large ribosomal subunit protein uL23 (100 aa).

This sequence belongs to the universal ribosomal protein uL23 family. As to quaternary structure, part of the 50S ribosomal subunit. Contacts protein L29, and trigger factor when it is bound to the ribosome.

In terms of biological role, one of the early assembly proteins it binds 23S rRNA. One of the proteins that surrounds the polypeptide exit tunnel on the outside of the ribosome. Forms the main docking site for trigger factor binding to the ribosome. The protein is Large ribosomal subunit protein uL23 of Pseudoalteromonas translucida (strain TAC 125).